We begin with the raw amino-acid sequence, 387 residues long: MGGAADMRKKTKDRHSWKTGFTTGSCAAGAAKAACLLLKGLHQGTEVDIPLPQGERLQLPVHRWDRVEDVAWVSIIKNAGDDPDVTHGLEVVARVQLLSQRGEILIRGGRGIGVVTKKGLQIPPGESAINPVPRSMIQAAVREVFPQEEILVVIEVPEGERLALKTLNPRLGIMGGVSILGTTGIVRPMSEEAFKNSILPELDQAVAYGHKAIVLTPGNYGFKVAREQLMVPEEAIIQMSNFVGFLLEEAAYRKIEKVLLLGHIGKLIKVAGGIFHTHTHVADARMEILVAHAALAGMDQNSLQTIAELPTVEGAAEEIRSKGWGSLLFKLAERASHRAQDHVHGELQVGTAFTLLNGEIIAWDDPAMEIGKEFWHWPPVEEEFWRK.

This sequence belongs to the CbiD family.

It carries out the reaction Co-precorrin-5B + S-adenosyl-L-methionine = Co-precorrin-6A + S-adenosyl-L-homocysteine. It functions in the pathway cofactor biosynthesis; adenosylcobalamin biosynthesis; cob(II)yrinate a,c-diamide from sirohydrochlorin (anaerobic route): step 6/10. Catalyzes the methylation of C-1 in cobalt-precorrin-5B to form cobalt-precorrin-6A. The sequence is that of Cobalt-precorrin-5B C(1)-methyltransferase from Desulfitobacterium hafniense (strain Y51).